A 201-amino-acid polypeptide reads, in one-letter code: Small ribosomal subunit protein uS4 (201 aa).

The region spanning 92-155 (ARLDNVVFRL…KSLEVIANSL (64 aa)) is the S4 RNA-binding domain.

Belongs to the universal ribosomal protein uS4 family. As to quaternary structure, part of the 30S ribosomal subunit. Contacts protein S5. The interaction surface between S4 and S5 is involved in control of translational fidelity.

Its function is as follows. One of the primary rRNA binding proteins, it binds directly to 16S rRNA where it nucleates assembly of the body of the 30S subunit. Functionally, with S5 and S12 plays an important role in translational accuracy. The sequence is that of Small ribosomal subunit protein uS4 from Phocaeicola vulgatus (strain ATCC 8482 / DSM 1447 / JCM 5826 / CCUG 4940 / NBRC 14291 / NCTC 11154) (Bacteroides vulgatus).